The following is a 182-amino-acid chain: Dirigent protein 5 (182 aa).

Residues 1–23 (MVGQMKSFLFLFVFLVLTKTVIS) form the signal peptide. The cysteines at positions 35 and 181 are disulfide-linked. Asn54 and Asn118 each carry an N-linked (GlcNAc...) asparagine glycan.

The protein belongs to the plant dirigent protein family. As to quaternary structure, homodimer. As to expression, confined to shoot meristem, vascular region of cotyledons and siliques abscission zone.

The protein localises to the secreted. It is found in the extracellular space. It localises to the apoplast. In terms of biological role, dirigent proteins impart stereoselectivity on the phenoxy radical-coupling reaction, yielding optically active lignans from two molecules of coniferyl alcohol in the biosynthesis of lignans, flavonolignans, and alkaloids and thus plays a central role in plant secondary metabolism. Enantiocomplementary dirigent protein that mediates the laccase-catalyzed enantioselective oxidative phenol coupling of (E)-coniferyl alcohol to (-)-pinoresinol. This chain is Dirigent protein 5 (DIR5), found in Arabidopsis thaliana (Mouse-ear cress).